Consider the following 338-residue polypeptide: Glycerol-3-phosphate dehydrogenase [NAD(P)+] (338 aa).

Residues Ser-13, Trp-14, and Lys-108 each contribute to the NADPH site. Lys-108, Gly-139, and Ser-141 together coordinate sn-glycerol 3-phosphate. Residue Ala-143 coordinates NADPH. The sn-glycerol 3-phosphate site is built by Lys-194, Asp-247, Ser-257, Arg-258, and Asn-259. The Proton acceptor role is filled by Lys-194. Arg-258 is an NADPH binding site. NADPH contacts are provided by Val-282 and Glu-284.

The protein belongs to the NAD-dependent glycerol-3-phosphate dehydrogenase family.

Its subcellular location is the cytoplasm. It catalyses the reaction sn-glycerol 3-phosphate + NAD(+) = dihydroxyacetone phosphate + NADH + H(+). It carries out the reaction sn-glycerol 3-phosphate + NADP(+) = dihydroxyacetone phosphate + NADPH + H(+). The protein operates within membrane lipid metabolism; glycerophospholipid metabolism. Its function is as follows. Catalyzes the reduction of the glycolytic intermediate dihydroxyacetone phosphate (DHAP) to sn-glycerol 3-phosphate (G3P), the key precursor for phospholipid synthesis. This Listeria monocytogenes serotype 4a (strain HCC23) protein is Glycerol-3-phosphate dehydrogenase [NAD(P)+].